Here is a 1374-residue protein sequence, read N- to C-terminus: Tripeptidyl-peptidase 2 (1374 aa).

One can recognise a Peptidase S8 domain in the interval alanine 62–tyrosine 558. Residues aspartate 93, histidine 314, and serine 499 each act as charge relay system in the active site.

The protein belongs to the peptidase S8 family. Expressed in intestinal fat-storing cells and some head neurons.

The catalysed reaction is Release of an N-terminal tripeptide from a polypeptide.. Functionally, component of the proteolytic cascade acting downstream of the 26S proteasome in the ubiquitin-proteasome pathway. Has a role in regulation of fat storage. The polypeptide is Tripeptidyl-peptidase 2 (tpp-2) (Caenorhabditis elegans).